Consider the following 360-residue polypeptide: Photosystem II protein D1 1 (360 aa).

3 helical membrane-spanning segments follow: residues 29–46, 118–133, and 142–156; these read YVGW…TATT, HFLI…EWEL, and WICV…AATA. A chlorophyll a-binding site is contributed by His-118. Residue Tyr-126 participates in pheophytin a binding. Asp-170 and Glu-189 together coordinate [CaMn4O5] cluster. The helical transmembrane segment at 197–218 threads the bilayer; sequence FHMLGVAGVFGGSLFSAMHGSL. His-198 contributes to the chlorophyll a binding site. A quinone contacts are provided by residues His-215 and 264–265; that span reads SF. Fe cation is bound at residue His-215. His-272 is a Fe cation binding site. The helical transmembrane segment at 274-288 threads the bilayer; sequence FLGAWPVVGIWFTAL. Positions 332, 333, 342, and 344 each coordinate [CaMn4O5] cluster. A propeptide spanning residues 345–360 is cleaved from the precursor; that stretch reads AGEQAPVALQAPAING.

It belongs to the reaction center PufL/M/PsbA/D family. PSII is composed of 1 copy each of membrane proteins PsbA, PsbB, PsbC, PsbD, PsbE, PsbF, PsbH, PsbI, PsbJ, PsbK, PsbL, PsbM, PsbT, PsbX, PsbY, PsbZ, Psb30/Ycf12, peripheral proteins PsbO, CyanoQ (PsbQ), PsbU, PsbV and a large number of cofactors. It forms dimeric complexes. The D1/D2 heterodimer binds P680, chlorophylls that are the primary electron donor of PSII, and subsequent electron acceptors. It shares a non-heme iron and each subunit binds pheophytin, quinone, additional chlorophylls, carotenoids and lipids. D1 provides most of the ligands for the Mn4-Ca-O5 cluster of the oxygen-evolving complex (OEC). There is also a Cl(-1) ion associated with D1 and D2, which is required for oxygen evolution. The PSII complex binds additional chlorophylls, carotenoids and specific lipids. serves as cofactor. Post-translationally, tyr-161 forms a radical intermediate that is referred to as redox-active TyrZ, YZ or Y-Z. C-terminally processed by CtpA; processing is essential to allow assembly of the oxygen-evolving complex and thus photosynthetic growth.

Its subcellular location is the cellular thylakoid membrane. The catalysed reaction is 2 a plastoquinone + 4 hnu + 2 H2O = 2 a plastoquinol + O2. Functionally, photosystem II (PSII) is a light-driven water:plastoquinone oxidoreductase that uses light energy to abstract electrons from H(2)O, generating O(2) and a proton gradient subsequently used for ATP formation. It consists of a core antenna complex that captures photons, and an electron transfer chain that converts photonic excitation into a charge separation. The D1/D2 (PsbA/PsbD) reaction center heterodimer binds P680, the primary electron donor of PSII as well as several subsequent electron acceptors. In Picosynechococcus sp. (strain ATCC 27264 / PCC 7002 / PR-6) (Agmenellum quadruplicatum), this protein is Photosystem II protein D1 1.